A 163-amino-acid polypeptide reads, in one-letter code: Phosphopantetheine adenylyltransferase (163 aa).

Substrate is bound at residue threonine 10. Residues 10–11 and histidine 18 contribute to the ATP site; that span reads TF. Residues lysine 42, leucine 74, and arginine 88 each contribute to the substrate site. Residues 89-91, glutamate 99, and 124-130 contribute to the ATP site; these read GLR and NSFISST.

It belongs to the bacterial CoaD family. Homohexamer. The cofactor is Mg(2+).

It localises to the cytoplasm. The catalysed reaction is (R)-4'-phosphopantetheine + ATP + H(+) = 3'-dephospho-CoA + diphosphate. It participates in cofactor biosynthesis; coenzyme A biosynthesis; CoA from (R)-pantothenate: step 4/5. Its function is as follows. Reversibly transfers an adenylyl group from ATP to 4'-phosphopantetheine, yielding dephospho-CoA (dPCoA) and pyrophosphate. The sequence is that of Phosphopantetheine adenylyltransferase from Shewanella sp. (strain W3-18-1).